A 225-amino-acid chain; its full sequence is Uridylate kinase (225 aa).

9 to 10 (GS) serves as a coordination point for ATP. Glycine 46 is a UMP binding site. Positions 47 and 51 each coordinate ATP. UMP contacts are provided by residues aspartate 67 and 115–121 (THPAHTT). Positions 141, 142, 147, and 150 each coordinate ATP.

This sequence belongs to the UMP kinase family. In terms of assembly, homohexamer.

The protein localises to the cytoplasm. The enzyme catalyses UMP + ATP = UDP + ADP. It participates in pyrimidine metabolism; CTP biosynthesis via de novo pathway; UDP from UMP (UMPK route): step 1/1. Inhibited by UTP. Its function is as follows. Catalyzes the reversible phosphorylation of UMP to UDP. In Methanococcus vannielii (strain ATCC 35089 / DSM 1224 / JCM 13029 / OCM 148 / SB), this protein is Uridylate kinase.